A 320-amino-acid chain; its full sequence is Aspartate carbamoyltransferase catalytic subunit (320 aa).

Positions 57 and 58 each coordinate carbamoyl phosphate. L-aspartate is bound at residue K85. The carbamoyl phosphate site is built by R107, H141, and Q144. L-aspartate contacts are provided by R174 and R228. G269 and P270 together coordinate carbamoyl phosphate.

Belongs to the aspartate/ornithine carbamoyltransferase superfamily. ATCase family. In terms of assembly, heterododecamer (2C3:3R2) of six catalytic PyrB chains organized as two trimers (C3), and six regulatory PyrI chains organized as three dimers (R2).

The catalysed reaction is carbamoyl phosphate + L-aspartate = N-carbamoyl-L-aspartate + phosphate + H(+). The protein operates within pyrimidine metabolism; UMP biosynthesis via de novo pathway; (S)-dihydroorotate from bicarbonate: step 2/3. Catalyzes the condensation of carbamoyl phosphate and aspartate to form carbamoyl aspartate and inorganic phosphate, the committed step in the de novo pyrimidine nucleotide biosynthesis pathway. This Mycobacterium marinum (strain ATCC BAA-535 / M) protein is Aspartate carbamoyltransferase catalytic subunit.